The following is a 435-amino-acid chain: Putative dimethyl sulfoxide reductase membrane subunit C (435 aa).

The next 11 membrane-spanning stretches (helical) occupy residues 22-42 (GWLGVLALLLVIGLGAWAYQL), 57-77 (WGLYIMLFVLFVGLSAGGLIL), 95-115 (LGVLVSLGCIIVAGLLILPDI), 135-155 (VWDFGIVMLYGALNVWYLWLL), 186-206 (FWTAVCALPAAVALHSVTGWI), 220-240 (LVAPVFIAKALVSGLGLLLVV), 257-277 (LTSLGKLLGIFLAFHVVYLLA), 281-301 (LPHAWAHHFGFWAITSNFLIG), 304-324 (VYFWLWTGLGGAVPLLLLATP), 333-353 (IFTASVLAVFGTLFEGIRLVF), and 392-412 (VEIAVTVGVISIGALIVMAGL).

This sequence belongs to the NrfD family. As to quaternary structure, probable multiprotein complex that likely consists of DmsA, DmsB and DmsC.

Its subcellular location is the cell membrane. Its function is as follows. Dimethyl sulfoxide (DMSO) reductase catalyzes the reduction of dimethyl sulfoxide (DMSO) to dimethyl sulfide (DMS) during anaerobic respiration; it can also use trimethylamine N-oxide (TMAO) as terminal electron acceptor. Subunit C is proposed to be a membrane anchoring subunit. The chain is Putative dimethyl sulfoxide reductase membrane subunit C (dmsC) from Halobacterium salinarum (strain ATCC 700922 / JCM 11081 / NRC-1) (Halobacterium halobium).